Reading from the N-terminus, the 458-residue chain is Argininosuccinate lyase (458 aa).

The protein belongs to the lyase 1 family. Argininosuccinate lyase subfamily.

The protein resides in the cytoplasm. The enzyme catalyses 2-(N(omega)-L-arginino)succinate = fumarate + L-arginine. It participates in amino-acid biosynthesis; L-arginine biosynthesis; L-arginine from L-ornithine and carbamoyl phosphate: step 3/3. The sequence is that of Argininosuccinate lyase from Actinobacillus pleuropneumoniae serotype 5b (strain L20).